A 612-amino-acid polypeptide reads, in one-letter code: Phosphopentomutase (612 aa).

A2 is modified (N-acetylalanine). Alpha-D-glucose 1,6-bisphosphate contacts are provided by R63 and S165. The active-site Phosphoserine intermediate is the S165. Mg(2+) is bound by residues S165, D322, D324, and D326. The residue at position 165 (S165) is a Phosphoserine. Alpha-D-glucose 1,6-bisphosphate contacts are provided by D326, R327, T400, E424, and K438.

The protein belongs to the phosphohexose mutase family. Monomer. Mg(2+) is required as a cofactor.

It is found in the cytoplasm. The protein localises to the cytosol. The catalysed reaction is alpha-D-ribose 1-phosphate = D-ribose 5-phosphate. It catalyses the reaction 2-deoxy-alpha-D-ribose 1-phosphate = 2-deoxy-D-ribose 5-phosphate. It carries out the reaction alpha-D-glucose 1-phosphate = alpha-D-glucose 6-phosphate. The enzyme catalyses O-phospho-L-seryl-[protein] + alpha-D-glucose 1-phosphate = alpha-D-glucose 1,6-bisphosphate + L-seryl-[protein]. The catalysed reaction is alpha-D-glucose 1,6-bisphosphate + L-seryl-[protein] = O-phospho-L-seryl-[protein] + alpha-D-glucose 6-phosphate. With respect to regulation, the phosphomutase activity is stimulated by glucose 1,6-bisphosphate. Catalyzes the conversion of the nucleoside breakdown products ribose-1-phosphate and deoxyribose-1-phosphate to the corresponding 5-phosphopentoses. Catalyzes the reversible isomerization of alpha-D-glucose 1-phosphate to alpha-D-glucose 6-phosphate but with a lower catalytic efficiency. The mechanism proceeds via the intermediate compound alpha-D-glucose 1,6-bisphosphate. In vitro, also has a low glucose 1,6-bisphosphate synthase activity which is most probably not physiologically relevant. In Homo sapiens (Human), this protein is Phosphopentomutase.